We begin with the raw amino-acid sequence, 333 residues long: tRNA N6-adenosine threonylcarbamoyltransferase (333 aa).

His-111 and His-115 together coordinate Fe cation. Substrate contacts are provided by residues 134-138, Asp-167, Gly-180, and Asn-272; that span reads LVSGG. Asp-300 contacts Fe cation.

It belongs to the KAE1 / TsaD family. Fe(2+) is required as a cofactor.

It is found in the cytoplasm. The catalysed reaction is L-threonylcarbamoyladenylate + adenosine(37) in tRNA = N(6)-L-threonylcarbamoyladenosine(37) in tRNA + AMP + H(+). In terms of biological role, required for the formation of a threonylcarbamoyl group on adenosine at position 37 (t(6)A37) in tRNAs that read codons beginning with adenine. Is involved in the transfer of the threonylcarbamoyl moiety of threonylcarbamoyl-AMP (TC-AMP) to the N6 group of A37, together with TsaE and TsaB. TsaD likely plays a direct catalytic role in this reaction. The polypeptide is tRNA N6-adenosine threonylcarbamoyltransferase (Legionella pneumophila subsp. pneumophila (strain Philadelphia 1 / ATCC 33152 / DSM 7513)).